Reading from the N-terminus, the 714-residue chain is MEMASAFTLNVRLDNIAIITIDVPDEKMNTLKAEFASQVRAIIKQLRENKELRGVVFISAKPDNFIAGADINMIGNCKTAQEAEALARQGQQLMAEIHALPIPVIAAIHGACLGGGLELALACHGRVCTDDPKTVLGLPEVQLGLLPGSGGTQRLPRLIGVSTALEMILTGKQLRAKQALKLGLVDDVVPHSILLEVAVELAKKDRPSSRPLPVRERILAGPLGRALLFKMVGKKTEHKTQGNYPATERILEVVETGLAQGTSSGYDAEARAFGELAMTPQSQALRSIFFASTDVKKDPGSDAPPAPLNSVGILGGGLMGGGIAYVTACKAGLPVRIKDINPQGINHALKYSWDQLEGKVRRRHLKASERDKQLALISGTTDYRGFAHRDLIIEAVFENLELKQQMVAEVEQNCAAHTIFASNTSSLPIGDIAAHATRPEQVIGLHFFSPVEKMPLVEIIPHAGTSAQTIATTVKLAKKQGKTPIVVRDKAGFYVNRILAPYINEAIRMLTKGERVEHIDAALVKFGFPVGPIQLLDEVGIDTGTKIIPVLEAAYGERFSAPANVVSSILNDDRKGRKNGRGFYLYGQKGRKSKKQVDPAIYPLIGAQGQGRLSAPQVAERCVMLMLNEAVRCVDEQVIRSVRDGDIGAVFGIGFPPFLGGPFRYIDSLGAGEVVAIMQRLATQYGSRFTPCERLVEMGARGESFWKTTATDLQ.

The segment at 1–190 is enoyl-CoA hydratase; that stretch reads MEMASAFTLN…KLGLVDDVVP (190 aa). Positions 306-714 are 3-hydroxyacyl-CoA dehydrogenase; that stretch reads APLNSVGILG…FWKTTATDLQ (409 aa).

This sequence in the N-terminal section; belongs to the enoyl-CoA hydratase/isomerase family. In the central section; belongs to the 3-hydroxyacyl-CoA dehydrogenase family. Heterotetramer of two alpha chains (FadJ) and two beta chains (FadI).

It localises to the cytoplasm. It catalyses the reaction a (3S)-3-hydroxyacyl-CoA = a (2E)-enoyl-CoA + H2O. The enzyme catalyses a 4-saturated-(3S)-3-hydroxyacyl-CoA = a (3E)-enoyl-CoA + H2O. It carries out the reaction a (3S)-3-hydroxyacyl-CoA + NAD(+) = a 3-oxoacyl-CoA + NADH + H(+). The catalysed reaction is (3S)-3-hydroxybutanoyl-CoA = (3R)-3-hydroxybutanoyl-CoA. Its pathway is lipid metabolism; fatty acid beta-oxidation. Catalyzes the formation of a hydroxyacyl-CoA by addition of water on enoyl-CoA. Also exhibits 3-hydroxyacyl-CoA epimerase and 3-hydroxyacyl-CoA dehydrogenase activities. The chain is Fatty acid oxidation complex subunit alpha from Shigella boydii serotype 18 (strain CDC 3083-94 / BS512).